A 292-amino-acid polypeptide reads, in one-letter code: Elongation factor Ts (292 aa).

The interval Thr79 to Val82 is involved in Mg(2+) ion dislocation from EF-Tu.

The protein belongs to the EF-Ts family.

It localises to the cytoplasm. Associates with the EF-Tu.GDP complex and induces the exchange of GDP to GTP. It remains bound to the aminoacyl-tRNA.EF-Tu.GTP complex up to the GTP hydrolysis stage on the ribosome. This is Elongation factor Ts from Xanthomonas axonopodis pv. citri (strain 306).